A 272-amino-acid chain; its full sequence is 3-methyl-2-oxobutanoate hydroxymethyltransferase (272 aa).

Mg(2+) is bound by residues aspartate 43 and aspartate 82. Residues 43-44 (DS), aspartate 82, and lysine 112 contribute to the 3-methyl-2-oxobutanoate site. Glutamate 114 provides a ligand contact to Mg(2+). The active-site Proton acceptor is glutamate 179.

It belongs to the PanB family. In terms of assembly, homodecamer; pentamer of dimers. The cofactor is Mg(2+).

Its subcellular location is the cytoplasm. The enzyme catalyses 3-methyl-2-oxobutanoate + (6R)-5,10-methylene-5,6,7,8-tetrahydrofolate + H2O = 2-dehydropantoate + (6S)-5,6,7,8-tetrahydrofolate. It participates in cofactor biosynthesis; (R)-pantothenate biosynthesis; (R)-pantoate from 3-methyl-2-oxobutanoate: step 1/2. In terms of biological role, catalyzes the reversible reaction in which hydroxymethyl group from 5,10-methylenetetrahydrofolate is transferred onto alpha-ketoisovalerate to form ketopantoate. This is 3-methyl-2-oxobutanoate hydroxymethyltransferase from Staphylococcus aureus (strain JH1).